The chain runs to 496 residues: Glutamyl-tRNA(Gln) amidotransferase subunit A (496 aa).

Active-site charge relay system residues include K79 and S159. S183 serves as the catalytic Acyl-ester intermediate.

This sequence belongs to the amidase family. GatA subfamily. As to quaternary structure, heterotrimer of A, B and C subunits.

It catalyses the reaction L-glutamyl-tRNA(Gln) + L-glutamine + ATP + H2O = L-glutaminyl-tRNA(Gln) + L-glutamate + ADP + phosphate + H(+). Allows the formation of correctly charged Gln-tRNA(Gln) through the transamidation of misacylated Glu-tRNA(Gln) in organisms which lack glutaminyl-tRNA synthetase. The reaction takes place in the presence of glutamine and ATP through an activated gamma-phospho-Glu-tRNA(Gln). The polypeptide is Glutamyl-tRNA(Gln) amidotransferase subunit A (Bartonella quintana (strain Toulouse) (Rochalimaea quintana)).